The primary structure comprises 250 residues: Ureidoacrylate amidohydrolase RutB (250 aa).

The active-site Proton acceptor is D44. K153 is an active-site residue. Residue C186 is the Nucleophile of the active site.

This sequence belongs to the isochorismatase family. RutB subfamily.

It carries out the reaction (Z)-3-ureidoacrylate + H2O + H(+) = (Z)-3-aminoacrylate + NH4(+) + CO2. The enzyme catalyses (Z)-3-ureidoacrylate + H2O = (Z)-3-aminoacrylate + carbamate + H(+). It catalyses the reaction (Z)-2-methylureidoacrylate + H2O + H(+) = (Z)-2-methylaminoacrylate + NH4(+) + CO2. Its function is as follows. Hydrolyzes ureidoacrylate to form aminoacrylate and carbamate. The carbamate hydrolyzes spontaneously, thereby releasing one of the nitrogen atoms of the pyrimidine ring as ammonia and one of its carbon atoms as CO2. The sequence is that of Ureidoacrylate amidohydrolase RutB from Pantoea ananatis (strain LMG 20103).